Reading from the N-terminus, the 214-residue chain is Probable septum site-determining protein MinC (214 aa).

Belongs to the MinC family. As to quaternary structure, interacts with MinD and FtsZ.

Its function is as follows. Cell division inhibitor that blocks the formation of polar Z ring septums. Rapidly oscillates between the poles of the cell to destabilize FtsZ filaments that have formed before they mature into polar Z rings. Prevents FtsZ polymerization. This is Probable septum site-determining protein MinC from Caldanaerobacter subterraneus subsp. tengcongensis (strain DSM 15242 / JCM 11007 / NBRC 100824 / MB4) (Thermoanaerobacter tengcongensis).